Reading from the N-terminus, the 288-residue chain is MLTRIALFLATNFAVLILASIVMSLLGVNPSQMSGLLVMAAIFGFGGSFISLLLSKWMAKRSTGAVVITEPRNQTERWLLATVERQAKAAGIGMPEVAVYEGPEINAFATGANRNNALVAVSTGLLHNMSEDEAEAVLGHEIAHVANGDMITMALLQGVLNTFVIVLARVVGGIIDSALSGNREGGGRGFAYYIIVFVLEMVFGLFATMISMWFSRHREFRADAGGASLAGRQKMIAALERLQLNHGQSTLPTQIAAFGIAGSTAKKLFMSHPPLEERIAALRASTVA.

2 helical membrane passes run 5-25 (IALFLATNFAVLILASIVMSL) and 35-55 (GLLVMAAIFGFGGSFISLLLS). His-140 contributes to the Zn(2+) binding site. Residue Glu-141 is part of the active site. A Zn(2+)-binding site is contributed by His-144. Helical transmembrane passes span 155–175 (LLQGVLNTFVIVLARVVGGII) and 194–214 (IIVFVLEMVFGLFATMISMWF). Glu-219 lines the Zn(2+) pocket.

Belongs to the peptidase M48B family. It depends on Zn(2+) as a cofactor.

The protein resides in the cell inner membrane. The protein is Protease HtpX of Stenotrophomonas maltophilia (strain K279a).